The following is a 274-amino-acid chain: Peroxiredoxin-4 (274 aa).

A signal peptide spans 1–40 (MEAPPPPPPLPATTLAPGRSRKLLLLPLLLFLLRAEAVRG). The Thioredoxin domain occupies 82–240 (AKISKPAPYW…TLRLVQAFQY (159 aa)). Catalysis depends on Cys-127, which acts as the Cysteine sulfenic acid (-SOH) intermediate.

This sequence belongs to the peroxiredoxin family. AhpC/Prx1 subfamily. In terms of assembly, homodimer; disulfide-linked, upon oxidation. 5 homodimers assemble to form a ring-like decamer. Post-translationally, the enzyme can be inactivated by further oxidation of the cysteine sulfenic acid (C(P)-SOH) to sulphinic acid (C(P)-SO2H) and sulphonic acid (C(P)-SO3H) instead of its condensation to a disulfide bond.

Its subcellular location is the cytoplasm. The protein localises to the endoplasmic reticulum. It carries out the reaction a hydroperoxide + [thioredoxin]-dithiol = an alcohol + [thioredoxin]-disulfide + H2O. Functionally, thiol-specific peroxidase that catalyzes the reduction of hydrogen peroxide and organic hydroperoxides to water and alcohols, respectively. Plays a role in cell protection against oxidative stress by detoxifying peroxides and as sensor of hydrogen peroxide-mediated signaling events. Regulates the activation of NF-kappa-B in the cytosol by a modulation of I-kappa-B-alpha phosphorylation. The chain is Peroxiredoxin-4 (PRDX4) from Bos taurus (Bovine).